The chain runs to 447 residues: Protein disulfide-isomerase like 2-2 (447 aa).

Residues 1 to 26 form the signal peptide; sequence MERKMYKSTVFPICCLLFALFDRGNA. Thioredoxin domains follow at residues 27–139 and 161–275; these read LYGS…QIKA and KKKS…QLES. Residues Cys62 and Cys65 each act as nucleophile in the active site. Residues Cys62 and Cys65 are joined by a disulfide bond. Residues 146-170 are disordered; that stretch reads DGKTSGTKNGGGSSEKKKSEPSASV. An N-linked (GlcNAc...) asparagine glycan is attached at Asn173. Active-site nucleophile residues include Cys197 and Cys200. Cys197 and Cys200 form a disulfide bridge. Positions 444–447 match the Prevents secretion from ER motif; the sequence is KDDL.

Belongs to the protein disulfide isomerase family. Widely expressed.

It is found in the endoplasmic reticulum lumen. It carries out the reaction Catalyzes the rearrangement of -S-S- bonds in proteins.. In terms of biological role, acts as a protein-folding catalyst that interacts with nascent polypeptides to catalyze the formation, isomerization, and reduction or oxidation of disulfide bonds. This is Protein disulfide-isomerase like 2-2 (PDIL2-2) from Arabidopsis thaliana (Mouse-ear cress).